A 752-amino-acid polypeptide reads, in one-letter code: Catalase-peroxidase (752 aa).

Positions 1–21 (MSNESKCPFHQTAGGGTTNRD) are disordered. Residues 91–245 (WHSAGTYRIG…LAAVQMGLIY (155 aa)) constitute a cross-link (tryptophyl-tyrosyl-methioninium (Trp-Tyr) (with M-271)). His-92 acts as the Proton acceptor in catalysis. The interval 204 to 228 (QAPGQGDLVAEPAKHGEEQNRDLSA) is disordered. Over residues 215-228 (PAKHGEEQNRDLSA) the composition is skewed to basic and acidic residues. Residues 245-271 (YVNPEGPEGNPDPVASGKDIRETFGRM) constitute a cross-link (tryptophyl-tyrosyl-methioninium (Tyr-Met) (with W-91)). A heme-binding site is contributed by His-286. The tract at residues 366 to 391 (AHQWQPKEGKGAGTVPDAHDPSKRHA) is disordered.

Belongs to the peroxidase family. Peroxidase/catalase subfamily. In terms of assembly, homodimer or homotetramer. Heme b serves as cofactor. Formation of the three residue Trp-Tyr-Met cross-link is important for the catalase, but not the peroxidase activity of the enzyme.

The catalysed reaction is H2O2 + AH2 = A + 2 H2O. The enzyme catalyses 2 H2O2 = O2 + 2 H2O. In terms of biological role, bifunctional enzyme with both catalase and broad-spectrum peroxidase activity. The sequence is that of Catalase-peroxidase from Pseudomonas putida (strain W619).